The following is a 371-amino-acid chain: uncharacterized protein (371 aa).

The region spanning 43–148 (DESRVPKFYL…VQAFPTASNP (106 aa)) is the EH domain. The disordered stretch occupies residues 179–205 (SMRKKKESDSKEVSAHNSPAKGAAHDL).

This is an uncharacterized protein from Caenorhabditis elegans.